We begin with the raw amino-acid sequence, 175 residues long: Calcineurin subunit B (175 aa).

4 consecutive EF-hand domains span residues 21 to 56 (AEIERLKKRFMKLDKDSSGSIDKTEFMSIPGVSANP), 58 to 88 (AKRIIEVFDEDNSGDVDFQEFITSLSIFSGR), 90 to 125 (ETDAKLRFAFRIYDIDKDGYISNGELFIVLKIMVGT), and 131 to 166 (QLQQIVDRTIMENDVDGDGKLSFEEFKKAAETTEVI). Ca(2+) is bound by residues D34, D36, S38, S40, E45, D66, D68, S70, D72, E77, D103, D105, D107, Y109, E114, D144, D146, D148, K150, and E155.

It belongs to the calcineurin regulatory subunit family. Composed of a catalytic subunit (A) and a regulatory subunit (B).

Its function is as follows. Regulatory subunit of calcineurin, a calcium-dependent, calmodulin stimulated protein phosphatase. Confers calcium sensitivity. This Kluyveromyces lactis (strain ATCC 8585 / CBS 2359 / DSM 70799 / NBRC 1267 / NRRL Y-1140 / WM37) (Yeast) protein is Calcineurin subunit B (CNB1).